Here is a 222-residue protein sequence, read N- to C-terminus: Ribose-5-phosphate isomerase A (222 aa).

Substrate contacts are provided by residues 28-31 (TGST), 81-84 (DGAD), and 94-97 (KGGG). Glu-103 serves as the catalytic Proton acceptor. Lys-121 is a binding site for substrate.

Belongs to the ribose 5-phosphate isomerase family. In terms of assembly, homodimer.

The enzyme catalyses aldehydo-D-ribose 5-phosphate = D-ribulose 5-phosphate. It functions in the pathway carbohydrate degradation; pentose phosphate pathway; D-ribose 5-phosphate from D-ribulose 5-phosphate (non-oxidative stage): step 1/1. Its function is as follows. Catalyzes the reversible conversion of ribose-5-phosphate to ribulose 5-phosphate. This is Ribose-5-phosphate isomerase A from Azoarcus sp. (strain BH72).